Consider the following 382-residue polypeptide: Galactokinase (382 aa).

34–37 serves as a coordination point for substrate; that stretch reads EHTD. Residue 124 to 130 participates in ATP binding; it reads GAGLSSS. Positions 130 and 162 each coordinate Mg(2+). The active-site Proton acceptor is Asp174. Tyr223 lines the substrate pocket.

Belongs to the GHMP kinase family. GalK subfamily.

The protein resides in the cytoplasm. The catalysed reaction is alpha-D-galactose + ATP = alpha-D-galactose 1-phosphate + ADP + H(+). It participates in carbohydrate metabolism; galactose metabolism. Catalyzes the transfer of the gamma-phosphate of ATP to D-galactose to form alpha-D-galactose-1-phosphate (Gal-1-P). The protein is Galactokinase of Salmonella paratyphi A (strain ATCC 9150 / SARB42).